A 536-amino-acid chain; its full sequence is Light-independent protochlorophyllide reductase subunit B (536 aa).

Aspartate 36 is a binding site for [4Fe-4S] cluster. The active-site Proton donor is the aspartate 292. 427 to 428 (GL) contacts substrate. The tract at residues 447 to 489 (QSHLGHLGGHQSQTEQQQSQAATNPSTQSNTDSSSEESPLWTP) is disordered. The segment covering 448-469 (SHLGHLGGHQSQTEQQQSQAAT) has biased composition (low complexity). The span at 470 to 483 (NPSTQSNTDSSSEE) shows a compositional bias: polar residues.

It belongs to the ChlB/BchB/BchZ family. Protochlorophyllide reductase is composed of three subunits; ChlL, ChlN and ChlB. Forms a heterotetramer of two ChlB and two ChlN subunits. [4Fe-4S] cluster serves as cofactor.

It carries out the reaction chlorophyllide a + oxidized 2[4Fe-4S]-[ferredoxin] + 2 ADP + 2 phosphate = protochlorophyllide a + reduced 2[4Fe-4S]-[ferredoxin] + 2 ATP + 2 H2O. The protein operates within porphyrin-containing compound metabolism; chlorophyll biosynthesis (light-independent). Functionally, component of the dark-operative protochlorophyllide reductase (DPOR) that uses Mg-ATP and reduced ferredoxin to reduce ring D of protochlorophyllide (Pchlide) to form chlorophyllide a (Chlide). This reaction is light-independent. The NB-protein (ChlN-ChlB) is the catalytic component of the complex. The protein is Light-independent protochlorophyllide reductase subunit B of Prochlorococcus marinus (strain MIT 9303).